We begin with the raw amino-acid sequence, 179 residues long: tRNA (cytidine(56)-2'-O)-methyltransferase (179 aa).

S-adenosyl-L-methionine-binding positions include Leu-82, Gly-112–Val-116, and Val-130–Glu-137.

This sequence belongs to the aTrm56 family. In terms of assembly, homodimer.

The protein localises to the cytoplasm. The enzyme catalyses cytidine(56) in tRNA + S-adenosyl-L-methionine = 2'-O-methylcytidine(56) in tRNA + S-adenosyl-L-homocysteine + H(+). Specifically catalyzes the AdoMet-dependent 2'-O-ribose methylation of cytidine at position 56 in tRNAs. This chain is tRNA (cytidine(56)-2'-O)-methyltransferase, found in Methanococcus maripaludis (strain C6 / ATCC BAA-1332).